The following is a 467-amino-acid chain: Cysteine--tRNA ligase (467 aa).

Residue cysteine 30 coordinates Zn(2+). The 'HIGH' region motif lies at 32–42 (PTVYDDSHLGH). Zn(2+) is bound by residues cysteine 209, histidine 239, and glutamate 243. The 'KMSKS' region signature appears at 271 to 275 (KMSKS). An ATP-binding site is contributed by lysine 274.

It belongs to the class-I aminoacyl-tRNA synthetase family. Monomer. Requires Zn(2+) as cofactor.

It is found in the cytoplasm. The catalysed reaction is tRNA(Cys) + L-cysteine + ATP = L-cysteinyl-tRNA(Cys) + AMP + diphosphate. This is Cysteine--tRNA ligase from Aliarcobacter butzleri (strain RM4018) (Arcobacter butzleri).